The primary structure comprises 208 residues: Dephospho-CoA kinase (208 aa).

In terms of domain architecture, DPCK spans Glu3–Ala208. Position 11 to 16 (Gly11 to Arg16) interacts with ATP.

This sequence belongs to the CoaE family.

The protein resides in the cytoplasm. It carries out the reaction 3'-dephospho-CoA + ATP = ADP + CoA + H(+). It participates in cofactor biosynthesis; coenzyme A biosynthesis; CoA from (R)-pantothenate: step 5/5. Functionally, catalyzes the phosphorylation of the 3'-hydroxyl group of dephosphocoenzyme A to form coenzyme A. This Cupriavidus pinatubonensis (strain JMP 134 / LMG 1197) (Cupriavidus necator (strain JMP 134)) protein is Dephospho-CoA kinase.